The sequence spans 147 residues: UPF0306 protein YPTB0506 (147 aa).

The protein belongs to the UPF0306 family.

In Yersinia pseudotuberculosis serotype I (strain IP32953), this protein is UPF0306 protein YPTB0506.